The sequence spans 186 residues: ATP synthase subunit delta (186 aa).

The protein belongs to the ATPase delta chain family. As to quaternary structure, F-type ATPases have 2 components, F(1) - the catalytic core - and F(0) - the membrane proton channel. F(1) has five subunits: alpha(3), beta(3), gamma(1), delta(1), epsilon(1). CF(0) has four main subunits: a(1), b(1), b'(1) and c(10-14). The alpha and beta chains form an alternating ring which encloses part of the gamma chain. F(1) is attached to F(0) by a central stalk formed by the gamma and epsilon chains, while a peripheral stalk is formed by the delta, b and b' chains.

It localises to the cell inner membrane. Functionally, f(1)F(0) ATP synthase produces ATP from ADP in the presence of a proton or sodium gradient. F-type ATPases consist of two structural domains, F(1) containing the extramembraneous catalytic core and F(0) containing the membrane proton channel, linked together by a central stalk and a peripheral stalk. During catalysis, ATP synthesis in the catalytic domain of F(1) is coupled via a rotary mechanism of the central stalk subunits to proton translocation. This protein is part of the stalk that links CF(0) to CF(1). It either transmits conformational changes from CF(0) to CF(1) or is implicated in proton conduction. This chain is ATP synthase subunit delta, found in Rhodopseudomonas palustris (strain BisB5).